The sequence spans 262 residues: 26 kDa secreted antigen (262 aa).

An N-terminal signal peptide occupies residues 1–21 (MSVVHKACLIALLFVSSGVAQ). ShKT domains follow at residues 23 to 57 (CMDSASDCAANAGSCFTRPVSQVLQNRCQRTCNTC) and 59 to 93 (CRDEANNCAASINLCQNPTFEPLVRDRCQKTCGLC). 6 disulfide bridges follow: Cys23–Cys57, Cys30–Cys50, Cys37–Cys54, Cys59–Cys93, Cys66–Cys86, and Cys73–Cys90.

It belongs to the phosphatidylethanolamine-binding protein family.

Its subcellular location is the secreted. Its function is as follows. Binds phosphatidylethanolamine. This Toxocara canis (Canine roundworm) protein is 26 kDa secreted antigen (TES-26).